A 95-amino-acid polypeptide reads, in one-letter code: Progonadoliberin-1 (95 aa).

The N-terminal stretch at 1 to 23 (MAPQTSNLWLLLVVMMVMSQGCC) is a signal peptide. Q24 carries the pyrrolidone carboxylic acid modification. At G33 the chain carries Glycine amide.

The protein belongs to the GnRH family.

It localises to the secreted. Its function is as follows. Stimulates the secretion of gonadotropins. The protein is Progonadoliberin-1 (gnrh1) of Pagrus major (Red sea bream).